A 315-amino-acid chain; its full sequence is FGFR1 oncogene partner 2 homolog (315 aa).

Coiled coils occupy residues 32–99 (EEAE…RAME) and 156–183 (VVQR…ISKQ). Disordered regions lie at residues 201–222 (KAVQ…SGAS) and 238–315 (PEQP…APAT). Positions 246–269 (GTTNSFNTAPVHSQSETQAPSVTL) are enriched in polar residues.

It belongs to the SIKE family.

The polypeptide is FGFR1 oncogene partner 2 homolog (Drosophila melanogaster (Fruit fly)).